Here is a 615-residue protein sequence, read N- to C-terminus: Pre-hexon-linking protein IIIa (615 aa).

The peripentonal hexon-tethering domain stretch occupies residues 1-92; it reads MDPGLKPSSS…DLLIRVHKYN (92 aa). Residues 124-238 form a binding to hexon-linking protein region; sequence SNQVILNDFL…FTNENTFTPD (115 aa). Phosphoserine; by host is present on serine 212. Residue threonine 262 is modified to Phosphothreonine; by host. Residues 400–409 show a composition bias toward basic and acidic residues; it reads EREALEEAGP. Disordered regions lie at residues 400–473 and 528–615; these read EREA…SVDS and GERI…NGLK. 2 stretches are compositionally biased toward low complexity: residues 419 to 430 and 451 to 460; these read PSSSPQSSKIQS and SVRSAPPSVS. Residue serine 451 is modified to Phosphoserine; by host. Residues 539 to 548 are compositionally biased toward basic and acidic residues; sequence RAEIERRRIA. Positions 557-570 are enriched in low complexity; the sequence is PSLSSESSAPSLSS. A propeptide spanning residues 602 to 615 is cleaved from the precursor; the sequence is GNPFDYLRPRNGLK.

This sequence belongs to the adenoviridae hexon-linking protein IIIa family. Interacts with hexon proteins; this interaction tethers the peripentonal hexons to hexons situated in the facet. Interacts with the penton protein (via N-terminus). Interacts with packaging protein 3; this interaction is required to promote correct genome packaging. Cleaved near the C-terminus by the viral protease during virion maturation to form the mature protein.

The protein resides in the virion. The protein localises to the host nucleus. In terms of biological role, structural component of the virion that acts as a cement protein on the capsid exterior which mediates the interactions between the hexons, including the peripentonal hexons, and reaches all the way to the penton vertices. Two hexon linking proteins IIIa, one from each facet, stabilize the unique edge interface between a pair of facets. As the virus enters the host cell, hexon linking proteins IIIa are shed concomitant with virion acidification in the endosome. During virus assembly, seems to play a role in the serotype specificity of the packaging of viral DNA via its interaction with packaging protein 3. The polypeptide is Pre-hexon-linking protein IIIa (Snake adenovirus serotype 1 (SnAdV-1)).